A 631-amino-acid polypeptide reads, in one-letter code: Phosphomethylpyrimidine synthase (631 aa).

Residues asparagine 239, methionine 268, tyrosine 297, histidine 333, 353-355 (SRG), 394-397 (DGLR), and glutamate 433 contribute to the substrate site. Histidine 437 serves as a coordination point for Zn(2+). Tyrosine 460 is a substrate binding site. Histidine 501 provides a ligand contact to Zn(2+). Residues cysteine 581, cysteine 584, and cysteine 589 each coordinate [4Fe-4S] cluster.

It belongs to the ThiC family. As to quaternary structure, homodimer. [4Fe-4S] cluster is required as a cofactor.

It carries out the reaction 5-amino-1-(5-phospho-beta-D-ribosyl)imidazole + S-adenosyl-L-methionine = 4-amino-2-methyl-5-(phosphooxymethyl)pyrimidine + CO + 5'-deoxyadenosine + formate + L-methionine + 3 H(+). It participates in cofactor biosynthesis; thiamine diphosphate biosynthesis. Its function is as follows. Catalyzes the synthesis of the hydroxymethylpyrimidine phosphate (HMP-P) moiety of thiamine from aminoimidazole ribotide (AIR) in a radical S-adenosyl-L-methionine (SAM)-dependent reaction. The sequence is that of Phosphomethylpyrimidine synthase from Shigella sonnei (strain Ss046).